The sequence spans 316 residues: Large ribosomal subunit protein uL10 (316 aa).

The segment at 289-316 (AAAAAPAKEAPKEESEESDEDMGFGLFD) is disordered.

The protein belongs to the universal ribosomal protein uL10 family. In terms of assembly, P0 forms a pentameric complex by interaction with dimers of P1 and P2. Phosphorylated.

Its subcellular location is the nucleus. It is found in the cytoplasm. Functionally, ribosomal protein P0 is the functional equivalent of E.coli protein L10. The polypeptide is Large ribosomal subunit protein uL10 (RPLP0) (Gallus gallus (Chicken)).